The chain runs to 51 residues: Small ribosomal subunit protein eS31 (51 aa).

Positions 22, 25, 40, and 43 each coordinate Zn(2+). The segment at 22–43 adopts a C4-type zinc-finger fold; the sequence is CVRCSHGIFMADHGDRYACGRC.

The protein belongs to the eukaryotic ribosomal protein eS31 family. As to quaternary structure, part of the 30S ribosomal subunit. Zn(2+) is required as a cofactor.

This chain is Small ribosomal subunit protein eS31, found in Methanosphaera stadtmanae (strain ATCC 43021 / DSM 3091 / JCM 11832 / MCB-3).